The chain runs to 120 residues: UPF0091 protein PH1455 (120 aa).

The protein belongs to the UPF0091 family.

This is UPF0091 protein PH1455 from Pyrococcus horikoshii (strain ATCC 700860 / DSM 12428 / JCM 9974 / NBRC 100139 / OT-3).